We begin with the raw amino-acid sequence, 202 residues long: uncharacterized protein (202 aa).

Residues 1–202 (MRGILRMTVL…KGLRSAAEKR (202 aa)) form the START domain.

In terms of biological role, may play a role in the interaction of the bacterium with animal cells. This is an uncharacterized protein from Pseudomonas aeruginosa (strain ATCC 15692 / DSM 22644 / CIP 104116 / JCM 14847 / LMG 12228 / 1C / PRS 101 / PAO1).